Reading from the N-terminus, the 95-residue chain is Large ribosomal subunit protein uL23 (95 aa).

This sequence belongs to the universal ribosomal protein uL23 family. As to quaternary structure, part of the 50S ribosomal subunit. Contacts protein L29, and trigger factor when it is bound to the ribosome.

Its function is as follows. One of the early assembly proteins it binds 23S rRNA. One of the proteins that surrounds the polypeptide exit tunnel on the outside of the ribosome. Forms the main docking site for trigger factor binding to the ribosome. This Pediococcus pentosaceus (strain ATCC 25745 / CCUG 21536 / LMG 10740 / 183-1w) protein is Large ribosomal subunit protein uL23.